We begin with the raw amino-acid sequence, 756 residues long: Catalase-peroxidase (756 aa).

A cross-link (tryptophyl-tyrosyl-methioninium (Trp-Tyr) (with M-270)) is located at residues 91 to 244; it reads WHSAGTYRTG…LAAVQMGLIY (154 aa). Catalysis depends on H92, which acts as the Proton acceptor. Residues 198–230 are disordered; it reads AQKKMQQPGDGTLVAEPENHANEESRTASGERN. Over residues 214–223 the composition is skewed to basic and acidic residues; the sequence is PENHANEESR. The tryptophyl-tyrosyl-methioninium (Tyr-Met) (with W-91) cross-link spans 244–270; that stretch reads YVNPEGPEGVPDPVASAKDIRETFGRM. H285 contacts heme b. The disordered stretch occupies residues 371-390; it reads KNGAGAGKIPDAHDPSKRHA.

Belongs to the peroxidase family. Peroxidase/catalase subfamily. Homodimer or homotetramer. It depends on heme b as a cofactor. Formation of the three residue Trp-Tyr-Met cross-link is important for the catalase, but not the peroxidase activity of the enzyme.

It carries out the reaction H2O2 + AH2 = A + 2 H2O. The catalysed reaction is 2 H2O2 = O2 + 2 H2O. In terms of biological role, bifunctional enzyme with both catalase and broad-spectrum peroxidase activity. The chain is Catalase-peroxidase from Pseudomonas savastanoi pv. phaseolicola (strain 1448A / Race 6) (Pseudomonas syringae pv. phaseolicola (strain 1448A / Race 6)).